Here is a 605-residue protein sequence, read N- to C-terminus: E3 ubiquitin-protein ligase synoviolin A (605 aa).

Residues 1 to 19 (MTGASLALTAAVVAHAYYL) traverse the membrane as a helical segment. The Lumenal segment spans residues 20 to 35 (KNQFYPTVVYLTKSSP). Residues 36-56 (SMAVLYIQAFVLVFLLGKFMG) traverse the membrane as a helical segment. The Cytoplasmic segment spans residues 57 to 92 (KVFFGQLRAAEMEHLLERSWYAVTETCLAFTVFRDD). Residues 93-113 (FSPRFVALFTLLLFLKCFHWL) form a helical membrane-spanning segment. Over 114 to 129 (AEDRVDFMERSPNISW) the chain is Lumenal. The helical transmembrane segment at 130–150 (LFHFRILALMLLLGVLDAFFV) threads the bilayer. Over 151–163 (SHAYHSLVIRGAS) the chain is Cytoplasmic. A helical membrane pass occupies residues 164–184 (VQLVFGFEYAILMTVILTVFI). Topologically, residues 185 to 218 (KYILHSVDLQSENPWDNKAVYMLYTELFTGFIKV) are lumenal. Residues 219–239 (LLYVAFMTIMVKVHTFPLFAI) form a helical membrane-spanning segment. Positions 230–264 (KVHTFPLFAIRPMYLAMRQFKKAVTDAIMSRRAIR) are interaction with p53/TP53. Residues 240 to 605 (RPMYLAMRQF…KLETGTTDSQ (366 aa)) lie on the Cytoplasmic side of the membrane. Zn(2+) is bound by residues cysteine 285, cysteine 288, cysteine 301, histidine 303, histidine 306, cysteine 309, cysteine 320, and cysteine 323. An RING-type; atypical zinc finger spans residues 285–324 (CIICREEMVTGAKRLPCNHIFHTSCLRSWFQRQQTCPTCR). Over residues 334–355 (TQPQTPTEQQNQHQNQAQQQPT) the composition is skewed to low complexity. The tract at residues 334–433 (TQPQTPTEQQ…QPGAALPGFP (100 aa)) is disordered. Residues 356–391 (PVIPPQPNFPPGILPPFPPGMFPLWPPMGPFPPVPG) are compositionally biased toward pro residues. Residues 403–414 (PGSSSGSSPRPG) are compositionally biased toward low complexity. Residues 415–424 (ETSNVGSESQ) are compositionally biased toward polar residues. Positions 465-496 (EELRAMEGHERQNLEARLQCLQNIHTLLDAAM) form a coiled coil. Residues 513 to 605 (QPPISSTSTS…KLETGTTDSQ (93 aa)) are disordered. The span at 516–539 (ISSTSTSTSSAASASTAPTTSNIS) shows a compositional bias: low complexity. A compositionally biased stretch (polar residues) spans 546-555 (DTTSTVTNTE). Over residues 556 to 579 (SSQQSAPPAPVSVETLSGAEGGET) the composition is skewed to low complexity.

The protein belongs to the HRD1 family. In terms of assembly, homodimer.

The protein resides in the endoplasmic reticulum membrane. It catalyses the reaction S-ubiquitinyl-[E2 ubiquitin-conjugating enzyme]-L-cysteine + [acceptor protein]-L-lysine = [E2 ubiquitin-conjugating enzyme]-L-cysteine + N(6)-ubiquitinyl-[acceptor protein]-L-lysine.. It functions in the pathway protein modification; protein ubiquitination. Its function is as follows. E3 ubiquitin-protein ligase which accepts ubiquitin specifically from endoplasmic reticulum-associated UBC7 E2 ligase and transfers it to substrates, promoting their degradation. Component of the endoplasmic reticulum quality control (ERQC) system also called ER-associated degradation (ERAD) involved in ubiquitin-dependent degradation of misfolded endoplasmic reticulum proteins. Also promotes the degradation of normal but naturally short-lived proteins. Protects cells from ER stress-induced apoptosis. Sequesters p53 in the cytoplasm and promotes its degradation, thereby negatively regulating its biological function in transcription, cell cycle regulation and apoptosis. The protein is E3 ubiquitin-protein ligase synoviolin A (syvn1-a) of Xenopus laevis (African clawed frog).